The following is a 606-amino-acid chain: Ubiquitin carboxyl-terminal hydrolase 2 (606 aa).

Positions 1–201 are necessary for interaction with MDM4; sequence MSQLSSTLKR…RSEYLADYLE (201 aa). 2 disordered regions span residues 53–112 and 207–228; these read PSPP…GGSG and ASAPQVPTPTPPSRAPEVLSPT. A compositionally biased stretch (basic and acidic residues) spans 90-100; it reads KRAESQTRGTE. A USP domain is found at 268 to 600; that stretch reads AGLRNLGNTC…DAYLLFYELA (333 aa). The active-site Nucleophile is cysteine 277. A necessary for interaction with MDM4 region spans residues 404–504; it reads YLEREDSRIG…FPKILVLHLK (101 aa). Cysteine 426, cysteine 429, cysteine 477, and cysteine 480 together coordinate Zn(2+). The active-site Proton acceptor is the histidine 558.

The protein belongs to the peptidase C19 family. USP2 subfamily. In terms of assembly, homooligomer. Found in trimeric complex with MDM2 and MDM4 and USP2. Interacts with CCND1; the interaction is direct and promotes its stabilization by antagonizing ubiquitin-dependent degradation. Interacts (via N-terminus and C-terminus) with MDM2. Interacts with MDM4 and PER1. Interacts with KCNQ1; counteracts the NEDD4L-specific down-regulation of I(Ks) and restores plasma membrane localization of KCNQ1.

Its subcellular location is the cytoplasm. It is found in the perinuclear region. It catalyses the reaction Thiol-dependent hydrolysis of ester, thioester, amide, peptide and isopeptide bonds formed by the C-terminal Gly of ubiquitin (a 76-residue protein attached to proteins as an intracellular targeting signal).. Its activity is regulated as follows. Cleavage is inhibited by ubiquitin in a dosage-dependent manner. Cleavage is blocked by ubiquitin aldehyde. In terms of biological role, hydrolase that deubiquitinates polyubiquitinated target proteins such as MDM2, MDM4 and CCND1. Possesses both ubiquitin-specific peptidase and isopeptidase activities. Deubiquitinates MDM2 without reversing MDM2-mediated p53/TP53 ubiquitination and thus indirectly promotes p53/TP53 degradation and limits p53 activity. Has no deubiquitinase activity against p53/TP53. Prevents MDM2-mediated degradation of MDM4. Plays a role in the G1/S cell-cycle progression in normal and cancer cells. Plays a role in the regulation of myogenic differentiation of embryonic muscle cells. Regulates the circadian clock by modulating its intrinsic circadian rhythm and its capacity to respond to external cues. Associates with clock proteins and deubiquitinates core clock component PER1 but does not affect its overall stability. Regulates the nucleocytoplasmic shuttling and nuclear retention of PER1 and its repressive role on the clock transcription factors CLOCK and BMAL1. The polypeptide is Ubiquitin carboxyl-terminal hydrolase 2 (USP2) (Bos taurus (Bovine)).